A 34-amino-acid chain; its full sequence is LSKKQCGADGQFCFLPGLGLNCCSGLCLIVCVPT.

A propeptide spanning residues 1–4 is cleaved from the precursor; that stretch reads LSKK. Gln5 bears the Pyrrolidone carboxylic acid mark. Cystine bridges form between Cys6-Cys23, Cys13-Cys27, and Cys22-Cys31.

In terms of tissue distribution, expressed by the venom duct.

Its subcellular location is the secreted. Its function is as follows. Probable toxin from a worm-hunter cone snail. Shows an excitatory activity on a majority of mouse lumbar dorsal root ganglion (DRG) neurons. Very probably inhibits the inactivation of voltage-gated sodium channels (Nav). The polypeptide is Delta-conotoxin AtVIA (Conus ateralbus (Cone snail)).